We begin with the raw amino-acid sequence, 95 residues long: Putative membrane protein insertion efficiency factor (95 aa).

The disordered stretch occupies residues 72 to 95; the sequence is FDPVPDAPTSPSPSSSCSCKGPHP. The segment covering 83–95 has biased composition (low complexity); it reads SPSSSCSCKGPHP.

Belongs to the UPF0161 family.

The protein resides in the cell inner membrane. Its function is as follows. Could be involved in insertion of integral membrane proteins into the membrane. In Xanthomonas axonopodis pv. citri (strain 306), this protein is Putative membrane protein insertion efficiency factor.